The primary structure comprises 709 residues: Elongation factor G (709 aa).

One can recognise a tr-type G domain in the interval Asn-10–Glu-295. Residues Ala-19 to Thr-26, Asp-91 to His-95, and Asn-145 to Asp-148 each bind GTP.

This sequence belongs to the TRAFAC class translation factor GTPase superfamily. Classic translation factor GTPase family. EF-G/EF-2 subfamily.

The protein resides in the cytoplasm. Functionally, catalyzes the GTP-dependent ribosomal translocation step during translation elongation. During this step, the ribosome changes from the pre-translocational (PRE) to the post-translocational (POST) state as the newly formed A-site-bound peptidyl-tRNA and P-site-bound deacylated tRNA move to the P and E sites, respectively. Catalyzes the coordinated movement of the two tRNA molecules, the mRNA and conformational changes in the ribosome. The protein is Elongation factor G of Bifidobacterium adolescentis (strain ATCC 15703 / DSM 20083 / NCTC 11814 / E194a).